The primary structure comprises 197 residues: MDLSPVKEALAAKSFDKIADICDTLMLQVASEGIEYHDDWPYAIHLLGYFYVDDCDSARFLWKRIPTAIKERKPEVVAAWGIGQKLWTHDYAGVYEAIRGYDWSQEAKDMVAAFSDLYTKRMFQLLLSAYSTITIHDLALFLGMTEDDATTYVVENGWTVDAASQMASVKKQAVKREQKVDSSKLQRLTEYVFHLEH.

Residues 20–190 form the PCI domain; the sequence is DICDTLMLQV…DSSKLQRLTE (171 aa).

This sequence belongs to the CSN8 family. In terms of assembly, component of the CSN complex, probably composed of CSN1, CSN2, CSN3, CSN4, CSN5 (CSN5A or CSN5B), CSN6 (CSN6A or CSN6B), CSN7 and CSN8. In the complex, it probably interacts directly with CSN4. Interacts with itself and (via PCI domain) with CSN7 (via PCI domain). Interacts with COP10. Binds to the translation initiation factors TIF3E1 and TIF3H1. As to expression, ubiquitous.

It localises to the cytoplasm. It is found in the nucleus. Component of the COP9 signalosome complex (CSN), a complex involved in various cellular and developmental processes such as photomorphogenesis and auxin and jasmonate responses. The CSN complex is an essential regulator of the ubiquitin (Ubl) conjugation pathway by mediating the deneddylation of the cullin subunits of SCF-type E3 ligase complexes, leading to decrease the Ubl ligase activity of SCF. It is involved in repression of photomorphogenesis in darkness by regulating the activity of COP1-containing Ubl ligase complexes. The complex is also required for degradation of IAA6 by regulating the activity of the Ubl ligase SCF-TIR complex. In Arabidopsis thaliana (Mouse-ear cress), this protein is COP9 signalosome complex subunit 8 (CSN8).